Reading from the N-terminus, the 146-residue chain is Phospho-2-dehydro-3-deoxyheptonate aldolase (146 aa).

The protein belongs to the class-II DAHP synthase family. In terms of assembly, homodimer.

It carries out the reaction D-erythrose 4-phosphate + phosphoenolpyruvate + H2O = 7-phospho-2-dehydro-3-deoxy-D-arabino-heptonate + phosphate. It participates in metabolic intermediate biosynthesis; chorismate biosynthesis; chorismate from D-erythrose 4-phosphate and phosphoenolpyruvate: step 1/7. This is Phospho-2-dehydro-3-deoxyheptonate aldolase from Streptomyces lividans.